The primary structure comprises 124 residues: Small ribosomal subunit protein uS12 (124 aa).

The segment at 1 to 25 (MPTINQLIRKPRKSQKEKTASPALQ) is disordered. Asp89 carries the post-translational modification 3-methylthioaspartic acid.

It belongs to the universal ribosomal protein uS12 family. Part of the 30S ribosomal subunit. Contacts proteins S8 and S17. May interact with IF1 in the 30S initiation complex.

With S4 and S5 plays an important role in translational accuracy. Functionally, interacts with and stabilizes bases of the 16S rRNA that are involved in tRNA selection in the A site and with the mRNA backbone. Located at the interface of the 30S and 50S subunits, it traverses the body of the 30S subunit contacting proteins on the other side and probably holding the rRNA structure together. The combined cluster of proteins S8, S12 and S17 appears to hold together the shoulder and platform of the 30S subunit. The protein is Small ribosomal subunit protein uS12 of Borrelia turicatae (strain 91E135).